Reading from the N-terminus, the 498-residue chain is Cytochrome P450 monooxygenase aflU (498 aa).

The chain crosses the membrane as a helical span at residues Thr-5–Phe-27. Asn-259 and Asn-354 each carry an N-linked (GlcNAc...) asparagine glycan. Position 438 (Cys-438) interacts with heme.

The protein belongs to the cytochrome P450 family. It depends on heme as a cofactor.

It localises to the membrane. It functions in the pathway mycotoxin biosynthesis; aflatoxin biosynthesis. In terms of biological role, cytochrome P450 monooxygenase; part of the gene cluster that mediates the biosynthesis of aflatoxins, a group of polyketide-derived furanocoumarins, and part of the most toxic and carcinogenic compounds among the known mycotoxins. The four major aflatoxins produced by A.parasiticus are aflatoxin B1 (AFB1), aflatoxin B2 (AFB2), aflatoxin G1 (AFG1) and aflatoxin G2 (AFG2). Within the aflatoxin pathway, the cytochrome P450 monooxygenase aflU is involved in the last steps in which OMST is converted to aflatoxins B1 and G1, and DHOMST to aflatoxins B2 and G2. The biosynthesis of aflatoxins begins with the norsolorinic acid synthase aflC that combines a hexanoyl starter unit produced by the fatty acid synthase aflA/aflB and 7 malonyl-CoA extender units to synthesize the precursor NOR. The second step is the conversion of NOR to averantin and requires the norsolorinic acid ketoreductase aflD, which catalyzes the dehydration of norsolorinic acid to form (1'S)-averantin. The norsolorinic acid reductases aflE and aflF may also play a role in the conversion of NOR to AVN. The cytochrome P450 monooxygenase aflG then catalyzes the hydroxylation of AVN to 5'hydroxyaverantin (HAVN). The next step is performed by the 5'-hydroxyaverantin dehydrogenase aflH that transforms HAVN to 5'-oxoaverantin (OAVN) which is further converted to averufin (AVF) by aflK that plays a dual role in the pathway, as a 5'-oxoaverantin cyclase that mediates conversion of 5'-oxoaverantin, as well as a versicolorin B synthase in a later step in the pathway. The averufin oxidase aflI catalyzes the conversion of AVF to versiconal hemiacetal acetate (VHA). VHA is then the substrate for the versiconal hemiacetal acetate esterase aflJ to yield versiconal (VAL). Versicolorin B synthase aflK then converts VAL to versicolorin B (VERB) by closing the bisfuran ring of aflatoxin which is required for DNA-binding, thus giving to aflatoxin its activity as a mutagen. Then, the activity of the versicolorin B desaturase aflL leads to versicolorin A (VERA). A branch point starts from VERB since it can also be converted to dihydrodemethylsterigmatocystin (DMDHST), probably also by aflL, VERA being a precursor for aflatoxins B1 and G1, and DMDHST for aflatoxins B2 and G2. Next, the versicolorin reductase aflM and the cytochrome P450 monooxygenase aflN are involved in conversion of VERA to demethylsterigmatocystin (DMST). AflX and aflY seem also involved in this step, through probable aflX-mediated epoxide ring-opening step following versicolorin A oxidation and aflY-mediated Baeyer-Villiger oxidation required for the formation of the xanthone ring. The methyltransferase aflO then leads to the modification of DMST to sterigmatocystin (ST), and of DMDHST to dihydrosterigmatocystin (DHST). Both ST and DHST are then substrates of the O-methyltransferase aflP to yield O-methylsterigmatocystin (OMST) and dihydro-O-methylsterigmatocystin (DHOMST), respectively. Finally OMST is converted to aflatoxins B1 and G1, and DHOMST to aflatoxins B2 and G2, via the action of several enzymes including O-methylsterigmatocystin oxidoreductase aflQ, the cytochrome P450 monooxygenase aflU, but also the NADH-dependent flavin oxidoreductase nadA which is specifically required for the synthesis of AFG1. This chain is Cytochrome P450 monooxygenase aflU, found in Aspergillus parasiticus (strain ATCC 56775 / NRRL 5862 / SRRC 143 / SU-1).